The primary structure comprises 232 residues: Sugar fermentation stimulation protein homolog (232 aa).

It belongs to the SfsA family.

This chain is Sugar fermentation stimulation protein homolog, found in Brucella anthropi (strain ATCC 49188 / DSM 6882 / CCUG 24695 / JCM 21032 / LMG 3331 / NBRC 15819 / NCTC 12168 / Alc 37) (Ochrobactrum anthropi).